We begin with the raw amino-acid sequence, 206 residues long: Casparian strip membrane protein 1 (206 aa).

Ala2 carries the post-translational modification N-acetylalanine. At 2–43 (AKESTTIDVGEPSTVTKSSSHVVKDAKKKGFVAVASRGGAKR) the chain is on the cytoplasmic side. Residues 44 to 64 (GLAIFDFLLRLAAIAVTIGAA) traverse the membrane as a helical segment. The Extracellular portion of the chain corresponds to 65 to 95 (SVMYTAEETLPFFTQFLQFQAGYDDLPAFQY). Residues 96–116 (FVIAVAVVASYLVLSLPFSIV) traverse the membrane as a helical segment. At 117 to 127 (SIVRPHAVAPR) the chain is on the cytoplasmic side. Residues 128 to 148 (LILLICDTLVVTLNTSAAAAA) traverse the membrane as a helical segment. Over 149–180 (ASITYLAHNGNQSTNWLPICQQFGDFCQNVST) the chain is Extracellular. Residues Asn159 and Asn177 are each glycosylated (N-linked (GlcNAc...) asparagine). The chain crosses the membrane as a helical span at residues 181-201 (AVVADSIAILFFIVLIIISAI). At 202-206 (ALKRH) the chain is on the cytoplasmic side.

It belongs to the Casparian strip membrane proteins (CASP) family. Homodimer and heterodimers with other CASP proteins. Interacts with CASP2, CASP3, CASP4 and CASP5.

The protein resides in the cell membrane. Regulates membrane-cell wall junctions and localized cell wall deposition. Required for establishment of the Casparian strip membrane domain (CSD) and the subsequent formation of Casparian strips, a cell wall modification of the root endodermis that determines an apoplastic barrier between the intraorganismal apoplasm and the extraorganismal apoplasm and prevents lateral diffusion. This is Casparian strip membrane protein 1 (CASP1) from Arabidopsis thaliana (Mouse-ear cress).